An 860-amino-acid chain; its full sequence is DNA mismatch repair protein MutS (860 aa).

618-625 (GPNMGGKS) provides a ligand contact to ATP.

The protein belongs to the DNA mismatch repair MutS family.

This protein is involved in the repair of mismatches in DNA. It is possible that it carries out the mismatch recognition step. This protein has a weak ATPase activity. This is DNA mismatch repair protein MutS from Hahella chejuensis (strain KCTC 2396).